Reading from the N-terminus, the 349-residue chain is Glycerol-1-phosphate dehydrogenase [NAD(P)+] (349 aa).

Residues 95–99 (GKSID) and 117–120 (TSPS) contribute to the NAD(+) site. Position 122 (D122) interacts with substrate. Residue S126 participates in NAD(+) binding. D169 provides a ligand contact to substrate. 2 residues coordinate Zn(2+): D169 and H249. H253 lines the substrate pocket. H265 provides a ligand contact to Zn(2+).

Belongs to the glycerol-1-phosphate dehydrogenase family. In terms of assembly, homodimer. Zn(2+) serves as cofactor.

It is found in the cytoplasm. The catalysed reaction is sn-glycerol 1-phosphate + NAD(+) = dihydroxyacetone phosphate + NADH + H(+). The enzyme catalyses sn-glycerol 1-phosphate + NADP(+) = dihydroxyacetone phosphate + NADPH + H(+). Its pathway is membrane lipid metabolism; glycerophospholipid metabolism. Catalyzes the NAD(P)H-dependent reduction of dihydroxyacetonephosphate (DHAP or glycerone phosphate) to glycerol 1-phosphate (G1P). The G1P thus generated is used as the glycerophosphate backbone of phospholipids in the cellular membranes of Archaea. In Hyperthermus butylicus (strain DSM 5456 / JCM 9403 / PLM1-5), this protein is Glycerol-1-phosphate dehydrogenase [NAD(P)+].